Consider the following 160-residue polypeptide: SsrA-binding protein (160 aa).

The segment at 132–160 is disordered; sequence KEFDKRDTVRERDSNRELQRTMRNKGKEE.

This sequence belongs to the SmpB family.

It is found in the cytoplasm. Its function is as follows. Required for rescue of stalled ribosomes mediated by trans-translation. Binds to transfer-messenger RNA (tmRNA), required for stable association of tmRNA with ribosomes. tmRNA and SmpB together mimic tRNA shape, replacing the anticodon stem-loop with SmpB. tmRNA is encoded by the ssrA gene; the 2 termini fold to resemble tRNA(Ala) and it encodes a 'tag peptide', a short internal open reading frame. During trans-translation Ala-aminoacylated tmRNA acts like a tRNA, entering the A-site of stalled ribosomes, displacing the stalled mRNA. The ribosome then switches to translate the ORF on the tmRNA; the nascent peptide is terminated with the 'tag peptide' encoded by the tmRNA and targeted for degradation. The ribosome is freed to recommence translation, which seems to be the essential function of trans-translation. The protein is SsrA-binding protein of Pseudomonas entomophila (strain L48).